A 780-amino-acid polypeptide reads, in one-letter code: MAPALSRSLYTSPLTSVPITPVSSRLSHLRSSFLPHGGALRTGVSCSWNLEKRCNRFAVKCDAAVAEKETTEEGSGEKFEYQAEVSRLLDLIVHSLYSHKEVFLRELVSNASDALDKLRFLSVTEPSLLGDGGDLEIRIKPDPDNGTITITDTGIGMTKEELIDCLGTIAQSGTSKFLKALKENKDLGADNGLIGQFGVGFYSAFLVAEKVVVSTKSPKSDKQYVWESVADSSSYLIREETDPDNILRRGTQITLYLREDDKYEFAESTRIKNLVKNYSQFVGFPIYTWQEKSRTIEVEEDEPVKEGEEGEPKKKKTTKTEKYWDWELANETKPLWMRNSKEVEKGEYNEFYKKAFNEFLDPLAHTHFTTEGEVEFRSILYIPGMGPLNNEDVTNPKTKNIRLYVKRVFISDDFDGELFPRYLSFVKGVVDSDDLPLNVSREILQESRIVRIMRKRLIRKTFDMIQEISESENKEDYKKFWENFGRFLKLGCIEDTGNHKRITPLLRFFSSKNEEELTSLDDYIENMGENQKAIYYLATDSLKSAKSAPFLEKLIQKDIEVLYLVEPIDEVAIQNLQTYKEKKFVDISKEDLELGDEDEVKDREAKQEFNLLCDWIKQQLGDKVAKVQVSNRLSSSPCVLVSGKFGWSANMERLMKAQALGDTSSLEFMRGRRILEINPDHPIIKDLNAACKNAPESTEATRVVDLLYDTAIISSGFTPDSPAELGNKIYEMMAMAVGGRWGRVEEEEESSTVNEGDDKSGETEVVEPSEVRAESDPWQD.

The transit peptide at methionine 1–lysine 60 directs the protein to the chloroplast. ATP-binding positions include glutamate 106, asparagine 110, aspartate 152, methionine 157, serine 172–glycine 173, glutamine 196–phenylalanine 201, threonine 251, and arginine 441. Residues glycine 742 to aspartate 780 are disordered. Residues serine 769 to aspartate 780 are compositionally biased toward basic and acidic residues.

It belongs to the heat shock protein 90 family. In terms of assembly, homodimer. Interacts with VIPP1. Interacts with P23-1. As to expression, expressed in roots, cotyledons, young leaves, mature leaves, stems, flowers, petals and siliques.

The protein localises to the plastid. It localises to the chloroplast stroma. In terms of biological role, molecular chaperone required for chloroplast biogenesis. Essential for chloroplast biogenesis and maintenance, and thus for embryogenesis. May be involved in the disassembly of VIPP1 for thylakoid membrane formation and/or maintenance. Cooperates with TIC components and other molecular chaperones to drive transport of preproteins into chloroplasts and functions in the chloroplast stroma to facilitate membrane translocation during protein import into the organelle. The protein is Heat shock protein 90-5, chloroplastic of Arabidopsis thaliana (Mouse-ear cress).